A 92-amino-acid polypeptide reads, in one-letter code: Small ribosomal subunit protein uS19 (92 aa).

This sequence belongs to the universal ribosomal protein uS19 family.

In terms of biological role, protein S19 forms a complex with S13 that binds strongly to the 16S ribosomal RNA. The sequence is that of Small ribosomal subunit protein uS19 from Sodalis glossinidius (strain morsitans).